The chain runs to 406 residues: Cysteine desulfurase (406 aa).

Lysine 226 carries the N6-(pyridoxal phosphate)lysine modification. Cysteine 364 serves as the catalytic Cysteine persulfide intermediate.

This sequence belongs to the class-V pyridoxal-phosphate-dependent aminotransferase family. Csd subfamily. As to quaternary structure, homodimer. Interacts with SufE and the SufBCD complex composed of SufB, SufC and SufD. The interaction with SufE is required to mediate the direct transfer of the sulfur atom from the S-sulfanylcysteine. The cofactor is pyridoxal 5'-phosphate.

It is found in the cytoplasm. It catalyses the reaction (sulfur carrier)-H + L-cysteine = (sulfur carrier)-SH + L-alanine. The catalysed reaction is L-selenocysteine + AH2 = hydrogenselenide + L-alanine + A + H(+). It functions in the pathway cofactor biosynthesis; iron-sulfur cluster biosynthesis. In terms of biological role, cysteine desulfurases mobilize the sulfur from L-cysteine to yield L-alanine, an essential step in sulfur metabolism for biosynthesis of a variety of sulfur-containing biomolecules. Component of the suf operon, which is activated and required under specific conditions such as oxidative stress and iron limitation. Acts as a potent selenocysteine lyase in vitro, that mobilizes selenium from L-selenocysteine. Selenocysteine lyase activity is however unsure in vivo. The protein is Cysteine desulfurase of Yersinia pestis bv. Antiqua (strain Antiqua).